A 312-amino-acid chain; its full sequence is Ribosomal protein L11 methyltransferase (312 aa).

Residues Thr163, Gly184, Asp206, and Asn248 each coordinate S-adenosyl-L-methionine.

The protein belongs to the methyltransferase superfamily. PrmA family.

The protein resides in the cytoplasm. The catalysed reaction is L-lysyl-[protein] + 3 S-adenosyl-L-methionine = N(6),N(6),N(6)-trimethyl-L-lysyl-[protein] + 3 S-adenosyl-L-homocysteine + 3 H(+). In terms of biological role, methylates ribosomal protein L11. This is Ribosomal protein L11 methyltransferase from Clostridium botulinum (strain Loch Maree / Type A3).